A 241-amino-acid polypeptide reads, in one-letter code: 2-C-methyl-D-erythritol 4-phosphate cytidylyltransferase (241 aa).

This sequence belongs to the IspD/TarI cytidylyltransferase family. IspD subfamily.

The catalysed reaction is 2-C-methyl-D-erythritol 4-phosphate + CTP + H(+) = 4-CDP-2-C-methyl-D-erythritol + diphosphate. It participates in isoprenoid biosynthesis; isopentenyl diphosphate biosynthesis via DXP pathway; isopentenyl diphosphate from 1-deoxy-D-xylulose 5-phosphate: step 2/6. Functionally, catalyzes the formation of 4-diphosphocytidyl-2-C-methyl-D-erythritol from CTP and 2-C-methyl-D-erythritol 4-phosphate (MEP). This is 2-C-methyl-D-erythritol 4-phosphate cytidylyltransferase from Baumannia cicadellinicola subsp. Homalodisca coagulata.